A 496-amino-acid polypeptide reads, in one-letter code: Cobyric acid synthase (496 aa).

One can recognise a GATase cobBQ-type domain in the interval 257-447; that stretch reads KINVAIILLK…MHGILDNPAV (191 aa). The active-site Nucleophile is the Cys338. The active site involves His439.

This sequence belongs to the CobB/CobQ family. CobQ subfamily.

Its pathway is cofactor biosynthesis; adenosylcobalamin biosynthesis. Functionally, catalyzes amidations at positions B, D, E, and G on adenosylcobyrinic A,C-diamide. NH(2) groups are provided by glutamine, and one molecule of ATP is hydrogenolyzed for each amidation. The protein is Cobyric acid synthase of Parabacteroides distasonis (strain ATCC 8503 / DSM 20701 / CIP 104284 / JCM 5825 / NCTC 11152).